The primary structure comprises 87 residues: Small ribosomal subunit protein uS17 (87 aa).

This sequence belongs to the universal ribosomal protein uS17 family. Part of the 30S ribosomal subunit.

Functionally, one of the primary rRNA binding proteins, it binds specifically to the 5'-end of 16S ribosomal RNA. The polypeptide is Small ribosomal subunit protein uS17 (Listeria innocua serovar 6a (strain ATCC BAA-680 / CLIP 11262)).